The sequence spans 1233 residues: Structural maintenance of chromosomes protein 1A (1233 aa).

32–39 contributes to the ATP binding site; sequence GPNGSGKS. Coiled coils occupy residues 104-124 and 163-503; these read EYKI…LEKL and ELAQ…KAEI. A compositionally biased stretch (basic and acidic residues) spans 284–293; it reads IKEKDSELNQ. Disordered stretches follow at residues 284-308 and 348-369; these read IKEK…TSHK and QEFE…TLEE. Phosphoserine occurs at positions 358 and 360. The 115-residue stretch at 515–629 folds into the SMC hinge domain; the sequence is VYGRLIDLCQ…DNVEDARRIA (115 aa). 2 positions are modified to N6-acetyllysine: lysine 648 and lysine 713. The stretch at 667–935 forms a coiled coil; that stretch reads DEKAVDKLKE…RHNLLQACKM (269 aa). The interval 947-969 is disordered; sequence MDDISQEEGSSQGEESVSGSQRT. Positions 953 to 967 are enriched in low complexity; it reads EEGSSQGEESVSGSQ. A phosphoserine mark is found at serine 957, serine 962, serine 966, and serine 970. Positions 988–1068 form a coiled coil; sequence EDLKDAQAEE…FEQIKKERFD (81 aa). N6-acetyllysine is present on lysine 1037.

It belongs to the SMC family. SMC1 subfamily. In terms of assembly, forms a heterodimer with SMC3 in cohesin complexes. Cohesin complexes are composed of the SMC1 (SMC1A or SMC1B) and SMC3 heterodimer attached via their SMC hinge domain, RAD21 which link them, and one STAG protein (STAG1, STAG2 or STAG3), which interacts with RAD21. In germ cell cohesin complexes, SMC1A is mutually exclusive with SMC1B. Interacts with STAG3. Found in a complex with CDCA5, SMC3 and RAD21, PDS5A/SCC-112 and PDS5B/APRIN. Found in a complex containing POLE and SMC3. Interacts with BRCA1, SYCP2, NDC80, RPGR and BRAT1. The cohesin complex interacts with the cohesin loading complex subunits NIPBL/Scc2 (via HEAT repeats) and MAU2/Scc4. NIPBL directly contacts all members of the complex, RAD21, SMC1A/B, SMC3 and STAG1. Post-translationally, phosphorylated upon ionizing radiation or DNA methylation. Phosphorylation of Ser-957 and Ser-966 activates it and is required for S-phase checkpoint activation. Ubiquitinated by the DCX(DCAF15) complex, leading to its degradation. In terms of tissue distribution, ubiquitous (at protein level).

Its subcellular location is the nucleus. It localises to the chromosome. The protein localises to the centromere. In terms of biological role, involved in chromosome cohesion during cell cycle and in DNA repair. Involved in DNA repair via its interaction with BRCA1 and its related phosphorylation by ATM, and works as a downstream effector in the ATM/NBS1 branch of S-phase checkpoint. Central component of cohesin complex. The cohesin complex is required for the cohesion of sister chromatids after DNA replication. The cohesin complex apparently forms a large proteinaceous ring within which sister chromatids can be trapped. At anaphase, the complex is cleaved and dissociates from chromatin, allowing sister chromatids to segregate. The cohesin complex may also play a role in spindle pole assembly during mitosis. Involved in DNA repair via its interaction with BRCA1 and its related phosphorylation by ATM, or via its phosphorylation by ATR. Works as a downstream effector both in the ATM/NBS1 branch and in the ATR/MSH2 branch of S-phase checkpoint. In Mus musculus (Mouse), this protein is Structural maintenance of chromosomes protein 1A (Smc1a).